The following is a 342-amino-acid chain: Protein BASIC PENTACYSTEINE6 (342 aa).

Residues 41 to 67 adopt a coiled-coil conformation; that stretch reads AIQERNLAISEKKAAVAERDMAFLQRD. Positions 41 to 76 are alanine-zipper; sequence AIQERNLAISEKKAAVAERDMAFLQRDTAIAERNNA. The disordered stretch occupies residues 143–199; that stretch reads REMEPNDGLPTSPPAGSTLESAKPKRGKRVNPKATTQTAANKRGPKNQRKVKKESED. A required for nucleus and nucleolus localization region spans residues 164 to 195; sequence AKPKRGKRVNPKATTQTAANKRGPKNQRKVKK. The span at 185–194 shows a compositional bias: basic residues; the sequence is RGPKNQRKVK. The short motif at 192 to 195 is the Nuclear localization signal element; it reads KVKK.

The protein belongs to the BBR/BPC family. As to quaternary structure, homodimer. Heterodimer with BPC4. Expressed in seedlings, leaves and pistils. Detected in the base of flowers and tips of carpels, in sepal vasculature, in young rosette, in the lateral and tip of primary roots, and in ovule at the exception of the outer integument.

The protein resides in the nucleus. It localises to the nucleolus. Functionally, transcriptional regulator that specifically binds to GA-rich elements (GAGA-repeats) present in regulatory sequences of genes involved in developmental processes. This chain is Protein BASIC PENTACYSTEINE6 (BPC6), found in Arabidopsis thaliana (Mouse-ear cress).